The sequence spans 712 residues: U11/U12 small nuclear ribonucleoprotein 48 kDa protein (712 aa).

The CHHC U11-48K-type zinc finger occupies 98–125 (FVRCPFDSNHFMPPEALFLHSLRCPNTL). 4 residues coordinate Zn(2+): cysteine 101, histidine 107, histidine 117, and cysteine 121. Residues 562–712 (QSRSPIGNDQ…EDRYIPTEKE (151 aa)) form a disordered region. Basic and acidic residues-rich tracts occupy residues 585 to 595 (KQWKGENRADI), 603 to 614 (QNSDKVKRHDEY), 629 to 663 (KHSDRRDDKLRDRRKDKHNDRRDDEFTRTKRHSIE), 672 to 693 (SSREKSSSDYKTKRDDPYDRRS), and 702 to 712 (FEDRYIPTEKE).

As to quaternary structure, component of the U11/U12 snRNPs that are part of the U12-type spliceosome. Not found in the major spliceosome.

It localises to the nucleus. Its function is as follows. Likely involved in U12-type 5' splice site recognition. This chain is U11/U12 small nuclear ribonucleoprotein 48 kDa protein (SNRNP48), found in Arabidopsis thaliana (Mouse-ear cress).